A 177-amino-acid polypeptide reads, in one-letter code: Large ribosomal subunit protein uL6 (177 aa).

It belongs to the universal ribosomal protein uL6 family. In terms of assembly, part of the 50S ribosomal subunit.

Its function is as follows. This protein binds to the 23S rRNA, and is important in its secondary structure. It is located near the subunit interface in the base of the L7/L12 stalk, and near the tRNA binding site of the peptidyltransferase center. This Actinobacillus succinogenes (strain ATCC 55618 / DSM 22257 / CCUG 43843 / 130Z) protein is Large ribosomal subunit protein uL6.